The sequence spans 233 residues: Ion-translocating oxidoreductase complex subunit E (233 aa).

Transmembrane regions (helical) follow at residues 18 to 38, 39 to 59, 69 to 89, 92 to 112, 128 to 148, and 182 to 202; these read ALVQ…ATNA, LGLG…VSAL, IPIY…LINA, FGLY…CIVI, ALDG…LGAL, and PFLL…LLAG.

This sequence belongs to the NqrDE/RnfAE family. As to quaternary structure, the complex is composed of six subunits: RnfA, RnfB, RnfC, RnfD, RnfE and RnfG.

The protein resides in the cell inner membrane. In terms of biological role, part of a membrane-bound complex that couples electron transfer with translocation of ions across the membrane. This chain is Ion-translocating oxidoreductase complex subunit E, found in Yersinia pseudotuberculosis serotype O:1b (strain IP 31758).